The following is a 680-amino-acid chain: MSVAPPAPSPPPFDPTKPSTPISFPIKTLQDLKSRSYFDSFHYPFNRSSVPLRRNIGALSDRPRLLVCHDMKGGYVDDKWVQGCGNNAGYAIWDWYLMDVFVYFSHSLVTLPPPCWTNTAHRHGVKVLGTFITEWDEGKATCKELLATKESAQMYAERLAELAAALGFDGWLINIENVIDEVQIPNLMVFVSHLTKVMHSSVPGGLVIWYDSVTIDGHLAWQDQLTENNKPFFDICDGIFMNYTWKENYPKASAEIAGDRKYDVYMGIDVFGRGTYGGGQWTANVALDLLKSSNVSAAIFAPGWVYETEQPPDFYTAQNKWWSLVEKSWGIVQTYPQVLPFYSDFNQGLGSHTSLGGRKLSEAPWYNISCQSLQPFLEFNEGRNSETIQVTVDGREASYNGGGNVSFRGKLKRNAHFTARLFKPQLQLSAAPISIFFSVKSDKRSELSILLHFSSPSQEKKSMLMVPNESINRFGDMFLPCLLTSKQTTSGWTVHETNLVLDGHTLTEISAFCSRPDDLTEETNTLEYFALLGHISIKSQQKAKVYPLASSWVIEAHHVKFVPGDSGSKTLSCKLEWRLKHPEEDSVFPKYNVYAENLSSSEYRPRKVMEEPRSEKVFLGTAHVDAYYVSEMVVGSDVKGVRFVVQTCGEDGSWQELDASPNLVVEVERVSSKLCCCGLI.

Pro residues predominate over residues 1–15; it reads MSVAPPAPSPPPFDP. A disordered region spans residues 1-21; it reads MSVAPPAPSPPPFDPTKPSTP.

Belongs to the glycosyl hydrolase 85 family.

The protein localises to the cytoplasm. Its subcellular location is the cytosol. It catalyses the reaction an N(4)-(oligosaccharide-(1-&gt;3)-[oligosaccharide-(1-&gt;6)]-beta-D-Man-(1-&gt;4)-beta-D-GlcNAc-(1-&gt;4)-alpha-D-GlcNAc)-L-asparaginyl-[protein] + H2O = an oligosaccharide-(1-&gt;3)-[oligosaccharide-(1-&gt;6)]-beta-D-Man-(1-&gt;4)-D-GlcNAc + N(4)-(N-acetyl-beta-D-glucosaminyl)-L-asparaginyl-[protein]. Functionally, endoglycosidase that releases N-glycans from glycoproteins by cleaving the beta-1,4-glycosidic bond in the N,N'-diacetylchitobiose core. Involved in the production of high-mannose type N-glycans during plant development and fruit maturation. The polypeptide is Cytosolic endo-beta-N-acetylglucosaminidase 1 (Arabidopsis thaliana (Mouse-ear cress)).